The primary structure comprises 564 residues: Proline--tRNA ligase (564 aa).

The protein belongs to the class-II aminoacyl-tRNA synthetase family. ProS type 1 subfamily. As to quaternary structure, homodimer.

The protein resides in the cytoplasm. It catalyses the reaction tRNA(Pro) + L-proline + ATP = L-prolyl-tRNA(Pro) + AMP + diphosphate. In terms of biological role, catalyzes the attachment of proline to tRNA(Pro) in a two-step reaction: proline is first activated by ATP to form Pro-AMP and then transferred to the acceptor end of tRNA(Pro). As ProRS can inadvertently accommodate and process non-cognate amino acids such as alanine and cysteine, to avoid such errors it has two additional distinct editing activities against alanine. One activity is designated as 'pretransfer' editing and involves the tRNA(Pro)-independent hydrolysis of activated Ala-AMP. The other activity is designated 'posttransfer' editing and involves deacylation of mischarged Ala-tRNA(Pro). The misacylated Cys-tRNA(Pro) is not edited by ProRS. The polypeptide is Proline--tRNA ligase (Coxiella burnetii (strain RSA 331 / Henzerling II)).